The chain runs to 498 residues: Phosphonates import ATP-binding protein PhnC (498 aa).

Positions Met-1 to Ala-27 are disordered. The region spanning Leu-28–Arg-269 is the ABC transporter domain. Gly-60–Ser-67 contributes to the ATP binding site. The lysR substrate binding domain stretch occupies residues Gly-270 to Pro-498.

This sequence belongs to the ABC transporter superfamily. Phosphonates importer (TC 3.A.1.9.1) family. As to quaternary structure, the complex is composed of two ATP-binding proteins (PhnC), two transmembrane proteins (PhnE) and a solute-binding protein (PhnD).

Its subcellular location is the cell inner membrane. The catalysed reaction is phosphonate(out) + ATP + H2O = phosphonate(in) + ADP + phosphate + H(+). Its function is as follows. Part of the ABC transporter complex PhnCDE involved in phosphonates import. Responsible for energy coupling to the transport system. This is Phosphonates import ATP-binding protein PhnC from Anaeromyxobacter dehalogenans (strain 2CP-C).